The chain runs to 172 residues: Large ribosomal subunit protein uL10 (172 aa).

The protein belongs to the universal ribosomal protein uL10 family. In terms of assembly, part of the ribosomal stalk of the 50S ribosomal subunit. The N-terminus interacts with L11 and the large rRNA to form the base of the stalk. The C-terminus forms an elongated spine to which L12 dimers bind in a sequential fashion forming a multimeric L10(L12)X complex.

Functionally, forms part of the ribosomal stalk, playing a central role in the interaction of the ribosome with GTP-bound translation factors. This chain is Large ribosomal subunit protein uL10, found in Nitrobacter winogradskyi (strain ATCC 25391 / DSM 10237 / CIP 104748 / NCIMB 11846 / Nb-255).